We begin with the raw amino-acid sequence, 591 residues long: Aspartate--tRNA(Asp/Asn) ligase (591 aa).

E175 is an L-aspartate binding site. The segment at 199–202 (QQFK) is aspartate. R221 and H453 together coordinate L-aspartate. 221–223 (RDE) provides a ligand contact to ATP. E486 is a binding site for ATP. Residue R493 coordinates L-aspartate. 538-541 (GIDR) contributes to the ATP binding site.

The protein belongs to the class-II aminoacyl-tRNA synthetase family. Type 1 subfamily. Homodimer.

It localises to the cytoplasm. It carries out the reaction tRNA(Asx) + L-aspartate + ATP = L-aspartyl-tRNA(Asx) + AMP + diphosphate. Functionally, aspartyl-tRNA synthetase with relaxed tRNA specificity since it is able to aspartylate not only its cognate tRNA(Asp) but also tRNA(Asn). Reaction proceeds in two steps: L-aspartate is first activated by ATP to form Asp-AMP and then transferred to the acceptor end of tRNA(Asp/Asn). In Cereibacter sphaeroides (strain ATCC 17025 / ATH 2.4.3) (Rhodobacter sphaeroides), this protein is Aspartate--tRNA(Asp/Asn) ligase.